Consider the following 313-residue polypeptide: GTP cyclohydrolase MptA (313 aa).

Belongs to the GTP cyclohydrolase IV family. Homodimer. The cofactor is Fe(2+).

The catalysed reaction is GTP + H2O = 7,8-dihydroneopterin 2',3'-cyclic phosphate + formate + diphosphate + H(+). It functions in the pathway cofactor biosynthesis; 5,6,7,8-tetrahydromethanopterin biosynthesis. In terms of biological role, converts GTP to 7,8-dihydro-D-neopterin 2',3'-cyclic phosphate, the first intermediate in the biosynthesis of coenzyme methanopterin. This is GTP cyclohydrolase MptA from Methanoculleus marisnigri (strain ATCC 35101 / DSM 1498 / JR1).